The chain runs to 663 residues: UvrABC system protein B (663 aa).

In terms of domain architecture, Helicase ATP-binding spans 26 to 414; sequence DGLESGLAKQ…DNVAEQVVRP (389 aa). An ATP-binding site is contributed by 39–46; that stretch reads GVTGSGKT. A Beta-hairpin motif is present at residues 92–115; it reads YYDYYQPEAYVPASDTFIEKDASI. The Helicase C-terminal domain maps to 430-596; that stretch reads QVDDLMSEIR…GINKSVEDIL (167 aa). The region spanning 624–659 is the UVR domain; it reads AKEINALEKQMYAHAQNMEFELAAKIRDEYLLLKEQ.

This sequence belongs to the UvrB family. In terms of assembly, forms a heterotetramer with UvrA during the search for lesions. Interacts with UvrC in an incision complex.

It is found in the cytoplasm. The UvrABC repair system catalyzes the recognition and processing of DNA lesions. A damage recognition complex composed of 2 UvrA and 2 UvrB subunits scans DNA for abnormalities. Upon binding of the UvrA(2)B(2) complex to a putative damaged site, the DNA wraps around one UvrB monomer. DNA wrap is dependent on ATP binding by UvrB and probably causes local melting of the DNA helix, facilitating insertion of UvrB beta-hairpin between the DNA strands. Then UvrB probes one DNA strand for the presence of a lesion. If a lesion is found the UvrA subunits dissociate and the UvrB-DNA preincision complex is formed. This complex is subsequently bound by UvrC and the second UvrB is released. If no lesion is found, the DNA wraps around the other UvrB subunit that will check the other stand for damage. The protein is UvrABC system protein B of Legionella pneumophila (strain Paris).